Reading from the N-terminus, the 737-residue chain is Polyribonucleotide nucleotidyltransferase (737 aa).

Mg(2+) contacts are provided by Asp-489 and Asp-495. Positions 556 to 615 (PKIDTIKIDVDKIKIVIGKGGETIDKIIAETGVKIDIDEEGNVSIYSSDQDAINRAKEII) constitute a KH domain. One can recognise an S1 motif domain in the interval 625-693 (DEVYRAKVVR…EKGRIDASMK (69 aa)). A disordered region spans residues 691 to 737 (SMKALLPRPPKPEHDEKGEKSERPHRPRHHKDHKPKKEFTETPKDSE). The span at 700 to 714 (PKPEHDEKGEKSERP) shows a compositional bias: basic and acidic residues. The span at 715–724 (HRPRHHKDHK) shows a compositional bias: basic residues. A compositionally biased stretch (basic and acidic residues) spans 725–737 (PKKEFTETPKDSE).

This sequence belongs to the polyribonucleotide nucleotidyltransferase family. It depends on Mg(2+) as a cofactor.

The protein localises to the cytoplasm. The enzyme catalyses RNA(n+1) + phosphate = RNA(n) + a ribonucleoside 5'-diphosphate. Its function is as follows. Involved in mRNA degradation. Catalyzes the phosphorolysis of single-stranded polyribonucleotides processively in the 3'- to 5'-direction. The chain is Polyribonucleotide nucleotidyltransferase from Streptococcus pneumoniae (strain ATCC 700669 / Spain 23F-1).